Here is a 432-residue protein sequence, read N- to C-terminus: Adenylosuccinate synthetase (432 aa).

Residues 13–19 (GDEGKGK) and 41–43 (GHT) contribute to the GTP site. The active-site Proton acceptor is D14. Mg(2+) is bound by residues D14 and G41. IMP is bound by residues 14 to 17 (DEGK), 39 to 42 (NAGH), T130, R144, Q225, T240, and R304. Catalysis depends on H42, which acts as the Proton donor. Residue 300 to 306 (ATTGRRR) participates in substrate binding. GTP is bound by residues R306, 332–334 (KLD), and 415–417 (STG).

Belongs to the adenylosuccinate synthetase family. As to quaternary structure, homodimer. The cofactor is Mg(2+).

The protein resides in the cytoplasm. It catalyses the reaction IMP + L-aspartate + GTP = N(6)-(1,2-dicarboxyethyl)-AMP + GDP + phosphate + 2 H(+). It functions in the pathway purine metabolism; AMP biosynthesis via de novo pathway; AMP from IMP: step 1/2. Functionally, plays an important role in the de novo pathway of purine nucleotide biosynthesis. Catalyzes the first committed step in the biosynthesis of AMP from IMP. In Citrobacter koseri (strain ATCC BAA-895 / CDC 4225-83 / SGSC4696), this protein is Adenylosuccinate synthetase.